A 335-amino-acid polypeptide reads, in one-letter code: Fimbrial adhesin PapGI (335 aa).

The signal sequence occupies residues 1-21; it reads MKKWFPAFLFLSLSGGNDALA.

The protein belongs to the adhesin PapG family. In terms of assembly, interacts with chaperone PapD. Assembly of the P pilus requires periplasmic chaperone PapD, in absence of the chaperone overexpression of this subunit is toxic, where the protein accumulates in the periplasm. PapD stimulates release of PapG from an inner membrane-associated form (where at least 1 disulfide bond can form) into the periplasm and also helps it achieve its correct digalactoside-binding conformation. Contains disulfide bonds.

It is found in the secreted. The protein resides in the fimbrium. Its function is as follows. Tip adhesin component of type P pili that binds preferentially to host cell glycosphingolipids such as globotriaosylceramide. This Escherichia coli protein is Fimbrial adhesin PapGI.